The primary structure comprises 521 residues: Zinc finger protein 394 (521 aa).

Positions 1 to 45 (MAAGSGVVPPPLGAGLCTVKVEEDSPGNQESSGSGDWQNPETSRK) are disordered. Residue Lys20 forms a Glycyl lysine isopeptide (Lys-Gly) (interchain with G-Cter in SUMO2) linkage. Over residues 26–41 (PGNQESSGSGDWQNPE) the composition is skewed to polar residues. The 96-residue stretch at 38 to 133 (QNPETSRKQF…RALDRASPQG (96 aa)) folds into the SCAN box domain. Residues 135 to 196 (MTFKDVAESL…KQEILKEAEP (62 aa)) form the KRAB domain. Residue Lys259 forms a Glycyl lysine isopeptide (Lys-Gly) (interchain with G-Cter in SUMO2) linkage. 3 consecutive C2H2-type zinc fingers follow at residues 327–349 (YKCDSCEKGFRQRSDLFKHQRIH), 355–377 (YQCQECGKRFSQSAALVKHQRTH), and 383–405 (YACPECGECFRQSSHLSRHQRTH). The C2H2-type 4; atypical zinc finger occupies 411-432 (YKCEECGEIVHVSSLFRHQRLH). Lys412 participates in a covalent cross-link: Glycyl lysine isopeptide (Lys-Gly) (interchain with G-Cter in SUMO2). C2H2-type zinc fingers lie at residues 438 to 460 (YKCGDCEKSFRQRSDLFKHQRTH), 466 to 488 (YACVVCGRRFSQSATLIKHQRTH), and 494 to 516 (YKCFQCGERFRQSTHLVRHQRIH).

It belongs to the krueppel C2H2-type zinc-finger protein family. Expressed at high level in testis.

The protein resides in the nucleus. Its function is as follows. May be involved in transcriptional regulation. The protein is Zinc finger protein 394 (Znf394) of Mus musculus (Mouse).